The chain runs to 103 residues: Cell division protein FtsB (103 aa).

Topologically, residues 1–3 (MGK) are cytoplasmic. Residues 4–21 (LTLLLLAILVWLQYSLWF) traverse the membrane as a helical segment. Residues 22-103 (GKNGIHDYTR…RAQSAGQNNR (82 aa)) lie on the Periplasmic side of the membrane. The stretch at 28–71 (DYTRVNDDVAALQATNAKLKARNDQLFAEIDDLNGGQEALEERA) forms a coiled coil.

This sequence belongs to the FtsB family. As to quaternary structure, part of a complex composed of FtsB, FtsL and FtsQ.

Its subcellular location is the cell inner membrane. Functionally, essential cell division protein. May link together the upstream cell division proteins, which are predominantly cytoplasmic, with the downstream cell division proteins, which are predominantly periplasmic. The polypeptide is Cell division protein FtsB (Shigella flexneri serotype 5b (strain 8401)).